The primary structure comprises 122 residues: Small ribosomal subunit protein bS6 (122 aa).

The interval 97 to 122 (TAPSPMMKAVQKEDAAKSHRAEAPAA) is disordered. Over residues 106-122 (VQKEDAAKSHRAEAPAA) the composition is skewed to basic and acidic residues.

Belongs to the bacterial ribosomal protein bS6 family.

Its function is as follows. Binds together with bS18 to 16S ribosomal RNA. The polypeptide is Small ribosomal subunit protein bS6 (Janthinobacterium sp. (strain Marseille) (Minibacterium massiliensis)).